The chain runs to 28 residues: Dermaseptin-H2 (28 aa).

The protein belongs to the frog skin active peptide (FSAP) family. Dermaseptin subfamily. Expressed by the skin glands.

The protein localises to the secreted. Functionally, possesses a potent antimicrobial activity against Gram-positive and Gram-negative bacteria. Probably acts by disturbing membrane functions with its amphipathic structure. The protein is Dermaseptin-H2 of Pithecopus azureus (Orange-legged monkey tree frog).